A 208-amino-acid chain; its full sequence is uncharacterized protein (208 aa).

This sequence to E.coli YagK.

This is an uncharacterized protein from Escherichia coli (strain K12).